A 244-amino-acid polypeptide reads, in one-letter code: tRNA (guanine-N(1)-)-methyltransferase (244 aa).

S-adenosyl-L-methionine is bound by residues glycine 113 and 133–138 (IGDYVL).

This sequence belongs to the RNA methyltransferase TrmD family. Homodimer.

Its subcellular location is the cytoplasm. The catalysed reaction is guanosine(37) in tRNA + S-adenosyl-L-methionine = N(1)-methylguanosine(37) in tRNA + S-adenosyl-L-homocysteine + H(+). Functionally, specifically methylates guanosine-37 in various tRNAs. The polypeptide is tRNA (guanine-N(1)-)-methyltransferase (Bacillus cereus (strain B4264)).